A 328-amino-acid chain; its full sequence is Tryptophan--tRNA ligase (328 aa).

ATP-binding positions include 9–11 (QPS) and 17–18 (GN). Positions 10-18 (PSGVITIGN) match the 'HIGH' region motif. Residue aspartate 132 coordinates L-tryptophan. ATP contacts are provided by residues 144 to 146 (GED), isoleucine 183, and 192 to 196 (KMSKS). Positions 192–196 (KMSKS) match the 'KMSKS' region motif.

Belongs to the class-I aminoacyl-tRNA synthetase family. In terms of assembly, homodimer.

The protein resides in the cytoplasm. The enzyme catalyses tRNA(Trp) + L-tryptophan + ATP = L-tryptophyl-tRNA(Trp) + AMP + diphosphate + H(+). With respect to regulation, inhibited by indolmycin, a competitive inhibitor for tryptophan. Functionally, catalyzes the attachment of tryptophan to tRNA(Trp). The chain is Tryptophan--tRNA ligase from Geobacillus stearothermophilus (Bacillus stearothermophilus).